A 690-amino-acid chain; its full sequence is Polyribonucleotide nucleotidyltransferase (690 aa).

Mg(2+)-binding residues include Asp483 and Asp489. The KH domain occupies 550–609 (PKMEQITVDKKDIAAVIGKGGATIREIVEKSGAKLDVNDEGVVTVAAPDEESRNIAMQMI). The 68-residue stretch at 619–686 (NKIYSGKVMK…DRGKVKLSMK (68 aa)) folds into the S1 motif domain.

It belongs to the polyribonucleotide nucleotidyltransferase family. Mg(2+) is required as a cofactor.

It localises to the cytoplasm. It catalyses the reaction RNA(n+1) + phosphate = RNA(n) + a ribonucleoside 5'-diphosphate. Functionally, involved in mRNA degradation. Catalyzes the phosphorolysis of single-stranded polyribonucleotides processively in the 3'- to 5'-direction. The protein is Polyribonucleotide nucleotidyltransferase of Pelagibacter ubique (strain HTCC1062).